The following is a 547-amino-acid chain: Signal recognition particle receptor subunit alpha homolog (547 aa).

Positions 124-174 (LENETDTKSLPVEANNDNSARKKNEYEMKKKGAQSKQTNAPKKGKKQLRKW) are disordered. The segment covering 142–153 (SARKKNEYEMKK) has biased composition (basic and acidic residues). The NG domain stretch occupies residues 343–546 (YTISLIGVNG…SVDWVVDQLM (204 aa)). Residues 349–356 (GVNGVGKS), 437–441 (DTAGR), and 498–501 (SKVD) each bind GTP.

Belongs to the GTP-binding SRP family. As to quaternary structure, heterodimer of an alpha and a beta chain.

The protein resides in the endoplasmic reticulum membrane. In terms of biological role, component of the SRP (signal recognition particle) receptor (SR). Ensures, in conjunction with the signal recognition particle, the correct targeting of the nascent secretory proteins to the endoplasmic reticulum membrane system. GTP hydrolysis may enhance the fidelity of and provide unidirectionality to the targeting reaction. In Schizosaccharomyces pombe (strain 972 / ATCC 24843) (Fission yeast), this protein is Signal recognition particle receptor subunit alpha homolog (srp101).